Consider the following 491-residue polypeptide: (R)-citramalate synthase CimA (491 aa).

Residues 3 to 254 form the Pyruvate carboxyltransferase domain; it reads VRIFDTTLRD…DTKIKMEKLY (252 aa).

It belongs to the alpha-IPM synthase/homocitrate synthase family. Homodimer.

It carries out the reaction pyruvate + acetyl-CoA + H2O = (3R)-citramalate + CoA + H(+). It participates in amino-acid biosynthesis; L-isoleucine biosynthesis; 2-oxobutanoate from pyruvate: step 1/3. Catalyzes the condensation of pyruvate and acetyl-coenzyme A to form (R)-citramalate. In Methanocaldococcus jannaschii (strain ATCC 43067 / DSM 2661 / JAL-1 / JCM 10045 / NBRC 100440) (Methanococcus jannaschii), this protein is (R)-citramalate synthase CimA (cimA).